The chain runs to 132 residues: Small ribosomal subunit protein uS8 (132 aa).

This sequence belongs to the universal ribosomal protein uS8 family. As to quaternary structure, part of the 30S ribosomal subunit. Contacts proteins S5 and S12.

Its function is as follows. One of the primary rRNA binding proteins, it binds directly to 16S rRNA central domain where it helps coordinate assembly of the platform of the 30S subunit. The polypeptide is Small ribosomal subunit protein uS8 (Caldicellulosiruptor bescii (strain ATCC BAA-1888 / DSM 6725 / KCTC 15123 / Z-1320) (Anaerocellum thermophilum)).